Consider the following 376-residue polypeptide: DNA replication and repair protein RecF (376 aa).

30 to 37 provides a ligand contact to ATP; the sequence is GHNGVGKT.

Belongs to the RecF family.

It is found in the cytoplasm. The RecF protein is involved in DNA metabolism; it is required for DNA replication and normal SOS inducibility. RecF binds preferentially to single-stranded, linear DNA. It also seems to bind ATP. The sequence is that of DNA replication and repair protein RecF from Salinispora arenicola (strain CNS-205).